The sequence spans 860 residues: MEQVAEGARVTAVPVSAADSTEELAEVEEGVGVVGEDNDAAARGAEAFGDSEEDGEDVFEVEKILDMKTEGGKVLYKVRWKGYTSDDDTWEPEIHLEDCKEVLLEFRKKIAENKAKAVRKDIQRLSLNNDIFEANSDSDQQSETKEDTSPKKKKKKLRQREEKSPDDLKKKKAKAGKLKDKSKPDLESSLESLVFDLRTKKRISEAKEELKESKKPKKDEVKETKELKKVKKGEIRDLKTKTREDPKENRKTKKEKFVESQVESESSVLNDSPFPEDDSEGLHSDSREEKQNTKSARERAGQDMGLEHGFEKPLDSAMSAEEDTDVRGRRKKKTPRKAEDTRENRKLENKNAFLEKKTVPKKQRNQDRSKSAAELEKLMPVSAQTPKGRRLSGEERGLWSTDSAEEDKETKRNESKEKYQKRHDSDKEEKGRKEPKGLKTLKEIRNAFDLFKLTPEEKNDVSENNRKREEIPLDFKTIDDHKTKENKQSLKERRNTRDETDTWAYIAAEGDQEVLDSVCQADENSDGRQQILSLGMDLQLEWMKLEDFQKHLDGKDENFAATDAIPSNVLRDAVKNGDYITVKVALNSNEEYNLDQEDSSGMTLVMLAAAGGQDDLLRLLITKGAKVNGRQKNGTTALIHAAEKNFLTTVAILLEAGAFVNVQQSNGETALMKACKRGNSDIVRLVIECGADCNILSKHQNSALHFAKQSNNVLVYDLLKNHLETLSRVAEETIKDYFEARLALLEPVFPIACHRLCEGPDFSTDFNYKPPQNIPEGSGILLFIFHANFLGKEVIARLCGPCSVQAVVLNDKFQLPVFLDSHFVYSFSPVAGPNKLFIRLTEAPSAKVKLLIGAYRVQLQ.

Met1 carries the N-acetylmethionine modification. A phosphoserine mark is found at Ser51, Ser85, Ser136, and Ser138. The Chromo domain occupies 59-118 (FEVEKILDMKTEGGKVLYKVRWKGYTSDDDTWEPEIHLEDCKEVLLEFRKKIAENKAKAV). The histone H3K9me3 binding stretch occupies residues 80-87 (WKGYTSDD). Residues 129–141 (NDIFEANSDSDQQ) show a composition bias toward polar residues. The disordered stretch occupies residues 129-191 (NDIFEANSDS…SKPDLESSLE (63 aa)). Residue Thr144 is modified to Phosphothreonine. 2 positions are modified to phosphoserine; by CDK1: Ser149 and Ser164. Composition is skewed to basic and acidic residues over residues 159–169 (QREEKSPDDLK) and 177–186 (KLKDKSKPDL). A phosphoserine mark is found at Ser188, Ser189, and Ser192. Basic and acidic residues predominate over residues 206 to 249 (AKEELKESKKPKKDEVKETKELKKVKKGEIRDLKTKTREDPKEN). The tract at residues 206-440 (AKEELKESKK…GRKEPKGLKT (235 aa)) is disordered. The span at 259–268 (ESQVESESSV) shows a compositional bias: low complexity. Phosphoserine occurs at positions 266, 272, and 279. A compositionally biased stretch (basic and acidic residues) spans 280 to 314 (EGLHSDSREEKQNTKSARERAGQDMGLEHGFEKPL). At Ser319 the chain carries Phosphoserine. Thr334 carries the post-translational modification Phosphothreonine; by CDK1. Basic and acidic residues predominate over residues 336-377 (RKAEDTRENRKLENKNAFLEKKTVPKKQRNQDRSKSAAELEK). Thr385 is modified (phosphothreonine; by CDK1). Phosphoserine is present on residues Ser392, Ser400, and Ser403. Over residues 408-440 (KETKRNESKEKYQKRHDSDKEEKGRKEPKGLKT) the composition is skewed to basic and acidic residues. The tract at residues 431 to 560 (GRKEPKGLKT…HLDGKDENFA (130 aa)) is interaction with humanin. Thr454 is subject to Phosphothreonine. Positions 458–496 (KNDVSENNRKREEIPLDFKTIDDHKTKENKQSLKERRNT) are disordered. 4 ANK repeats span residues 600–629 (SGMT…KVNG), 633–662 (NGTT…FVNV), 666–695 (NGET…DCNI), and 699–728 (HQNS…TLSR).

Homodimer. Interacts (via chromo domain) with histone H3K9me3. Has the highest affinity for H3K9me3, and lesser affinity for H3K9me2 and H3K9me1. Component of the HUSH complex; at least composed of TASOR, PPHLN1 and MPHOSPH8. Interacts with DNMT3, EHMT1 and SETDB1. Interacts with MORC2; the interaction associateS MORC2 with the HUSH complex which recruits MORC2 to heterochromatic loci. Interacts with ZNF638; leading to recruitment of the HUSH complex to unintegrated retroviral DNA. Interacts with TASOR. Interacts with humanin. In terms of processing, phosphorylated in M (mitotic) phase. Phosphorylation by CDK1 promotes dissociation from chromatin.

The protein localises to the nucleus. It is found in the chromosome. Heterochromatin component that specifically recognizes and binds methylated 'Lys-9' of histone H3 (H3K9me) and promotes recruitment of proteins that mediate epigenetic repression. Mediates recruitment of the HUSH complex to H3K9me3 sites: the HUSH complex is recruited to genomic loci rich in H3K9me3 and is required to maintain transcriptional silencing by promoting recruitment of SETDB1, a histone methyltransferase that mediates further deposition of H3K9me3, as well as MORC2. Binds H3K9me and promotes DNA methylation by recruiting DNMT3A to target CpG sites; these can be situated within the coding region of the gene. Mediates down-regulation of CDH1 expression. Also represses L1 retrotransposons in collaboration with MORC2 and, probably, SETDB1, the silencing is dependent of repressive epigenetic modifications, such as H3K9me3 mark. Silencing events often occur within introns of transcriptionally active genes, and lead to the down-regulation of host gene expression. The HUSH complex is also involved in the silencing of unintegrated retroviral DNA by being recruited by ZNF638: some part of the retroviral DNA formed immediately after infection remains unintegrated in the host genome and is transcriptionally repressed. This Homo sapiens (Human) protein is M-phase phosphoprotein 8.